The following is a 189-amino-acid chain: Mitochondrial FAD-linked sulfhydryl oxidase ERV1 (189 aa).

The 101-residue stretch at 83-183 (DPPDVEQLGR…FDCNFWEKRW (101 aa)) folds into the ERV/ALR sulfhydryl oxidase domain. Residues 88-95 (EQLGRSSW), His-99, and Tyr-128 each bind FAD. Intrachain disulfides connect Cys-130–Cys-133 and Cys-159–Cys-176. Residues 159–171 (CEAHNKVNKKLRK) and 182–183 (RW) each bind FAD.

As to quaternary structure, homodimer. Interacts with MIA40, forming transient intermolecular disulfide bridges. The cofactor is FAD.

The protein resides in the mitochondrion intermembrane space. It carries out the reaction 2 R'C(R)SH + O2 = R'C(R)S-S(R)CR' + H2O2. In terms of biological role, FAD-dependent sulfhydryl oxidase that catalyzes disulfide bond formation. Required for the import and folding of small cysteine-containing proteins in the mitochondrial intermembrane space (IMS). Forms a redox cycle with MIA40 that involves a disulfide relay system. Important for maintaining the cysteine residues in MIA40 in an oxidized state. Reduced ERV1 is reoxidized by cytochrome c. Required for the maturation of cytoplasmic, but not of mitochondrial Fe/S proteins. This Saccharomyces cerevisiae (strain ATCC 204508 / S288c) (Baker's yeast) protein is Mitochondrial FAD-linked sulfhydryl oxidase ERV1 (ERV1).